Here is a 556-residue protein sequence, read N- to C-terminus: Formate--tetrahydrofolate ligase (556 aa).

65–72 contributes to the ATP binding site; the sequence is TPAGEGKS.

This sequence belongs to the formate--tetrahydrofolate ligase family.

It carries out the reaction (6S)-5,6,7,8-tetrahydrofolate + formate + ATP = (6R)-10-formyltetrahydrofolate + ADP + phosphate. It participates in one-carbon metabolism; tetrahydrofolate interconversion. The chain is Formate--tetrahydrofolate ligase from Streptococcus agalactiae serotype III (strain NEM316).